The primary structure comprises 93 residues: Integration host factor subunit beta (93 aa).

Positions 59–93 (RVGRNPKTGQSVSLDGKFVPHFKPGKELRDRVNDD) are disordered. Over residues 82-93 (PGKELRDRVNDD) the composition is skewed to basic and acidic residues.

The protein belongs to the bacterial histone-like protein family. Heterodimer of an alpha and a beta chain.

Its function is as follows. This protein is one of the two subunits of integration host factor, a specific DNA-binding protein that functions in genetic recombination as well as in transcriptional and translational control. This Stutzerimonas stutzeri (strain A1501) (Pseudomonas stutzeri) protein is Integration host factor subunit beta.